Here is a 328-residue protein sequence, read N- to C-terminus: GMP reductase (328 aa).

C176 acts as the Thioimidate intermediate in catalysis. NADP(+) is bound at residue 205 to 228 (IIADGGIRTHGDIAKSIRFGASMI).

The protein belongs to the IMPDH/GMPR family. GuaC type 2 subfamily.

It carries out the reaction IMP + NH4(+) + NADP(+) = GMP + NADPH + 2 H(+). In terms of biological role, catalyzes the irreversible NADPH-dependent deamination of GMP to IMP. It functions in the conversion of nucleobase, nucleoside and nucleotide derivatives of G to A nucleotides, and in maintaining the intracellular balance of A and G nucleotides. In Streptococcus pneumoniae (strain CGSP14), this protein is GMP reductase.